Consider the following 191-residue polypeptide: Ribonuclease HII (191 aa).

Positions 4–191 (YTAAGLDEVG…HRKTFLSKIQ (188 aa)) constitute an RNase H type-2 domain. A divalent metal cation is bound by residues Asp10, Glu11, and Asp106.

This sequence belongs to the RNase HII family. The cofactor is Mn(2+). Mg(2+) serves as cofactor.

It localises to the cytoplasm. It carries out the reaction Endonucleolytic cleavage to 5'-phosphomonoester.. Functionally, endonuclease that specifically degrades the RNA of RNA-DNA hybrids. This Prochlorococcus marinus (strain SARG / CCMP1375 / SS120) protein is Ribonuclease HII.